A 245-amino-acid polypeptide reads, in one-letter code: NADH-quinone oxidoreductase subunit C (245 aa).

The segment covering 1 to 10 (MSAPQDRTDD) has biased composition (basic and acidic residues). Disordered regions lie at residues 1-54 (MSAP…GYGG) and 216-245 (PQRK…RSYQ). Over residues 11–28 (GGVPVPVTPAGATGGAPA) the composition is skewed to low complexity. Over residues 39–54 (GMFGDQGTGDVSGYGG) the composition is skewed to gly residues.

Belongs to the complex I 30 kDa subunit family. NDH-1 is composed of 14 different subunits. Subunits NuoB, C, D, E, F, and G constitute the peripheral sector of the complex.

The protein localises to the cell membrane. It catalyses the reaction a quinone + NADH + 5 H(+)(in) = a quinol + NAD(+) + 4 H(+)(out). Functionally, NDH-1 shuttles electrons from NADH, via FMN and iron-sulfur (Fe-S) centers, to quinones in the respiratory chain. The immediate electron acceptor for the enzyme in this species is believed to be a menaquinone. Couples the redox reaction to proton translocation (for every two electrons transferred, four hydrogen ions are translocated across the cytoplasmic membrane), and thus conserves the redox energy in a proton gradient. The polypeptide is NADH-quinone oxidoreductase subunit C (Salinispora tropica (strain ATCC BAA-916 / DSM 44818 / JCM 13857 / NBRC 105044 / CNB-440)).